A 957-amino-acid chain; its full sequence is MTQHLERPELLSIAATKALDKLQQAHPELLAQWPTERQNELETVIGLSDFIASSLVCDGQLLLWLSEHLDDKEHAEQYRQQLETKLATTADDVGLMRQLRAFRRQEMVWIAWRDFTNKSTLEQSLAHLSQLAEALIMEAYQWLYNQCCKEWGTPTNSAGEAQPMLVLGMGKLGGGELNFSSDIDLIFTYPENGDTVGGRRSMANAQFFTRLGQRLIKALDQPTYDGFCYRVDMRLRPFGDSGPLVMSYAALEDYYQEQGRDWERYAMIKARVMGRESFTQYQELRQMLRPFVFRRYIDFSAIQALRRMKSMISSEVRRRGLSNNIKLGAGGIREVEFIAQSFQLIRGGREPSLRGRGLLETLAAMKQLALLPEKQIEHLEQGYCFLRKLENLLQAIDDKQTQTLPDKPLDQIRLAFAMGYADWQSLFEAIELHMSAVHLVFDDIIGTDEDDAGCSVSEQYNEMWTMAKDEDVLLNIMAELEAPDSANQVSTILGMKAELSKRTLGPRGREVLTRLMPEVLSRIVPRPDASAVLARVTKLIVRVATRTTYLELLGEHPAALGQLIRLCAASPMVAEQLTQYPILLDELLDPQHLYNPTPLDQYGDELREYLARIPEEDMEQQMEAIRQYKQAQLLRIAAADIAGALPLMAVSDHLTYLAEAIITAVVNQAWLQMAEKYGEPTHLVDRNGKGFGVIGYGKVGGWELGYGSDLDVVFLHDCPADIYTNGKKEIDGRQFYLRLAQRIVHLFSTRTSSGVLYEIDVRLRPSGASGLLVSTVESFDEYQQKEAWTWEHQALVRARMIYGDVPLFDAFSDVRKRILTQPRDTQSLQVDVVSMRHKMRVHLGSKKNGMFGLKQDKGGITDIEFLAQYLVLQHSHTEPYLTRWSDNVRIFDTMAECEVLSLSQASALKQAYCVMRDDIHRLNLLGLPVYVDESQFVTERETVQQIWQEYLVPSSDE.

Residues 1 to 449 (MTQHLERPEL…VFDDIIGTDE (449 aa)) are adenylyl removase. Residues 457–957 (SEQYNEMWTM…QEYLVPSSDE (501 aa)) are adenylyl transferase.

It belongs to the GlnE family. Mg(2+) is required as a cofactor.

It carries out the reaction [glutamine synthetase]-O(4)-(5'-adenylyl)-L-tyrosine + phosphate = [glutamine synthetase]-L-tyrosine + ADP. The catalysed reaction is [glutamine synthetase]-L-tyrosine + ATP = [glutamine synthetase]-O(4)-(5'-adenylyl)-L-tyrosine + diphosphate. Its function is as follows. Involved in the regulation of glutamine synthetase GlnA, a key enzyme in the process to assimilate ammonia. When cellular nitrogen levels are high, the C-terminal adenylyl transferase (AT) inactivates GlnA by covalent transfer of an adenylyl group from ATP to specific tyrosine residue of GlnA, thus reducing its activity. Conversely, when nitrogen levels are low, the N-terminal adenylyl removase (AR) activates GlnA by removing the adenylyl group by phosphorolysis, increasing its activity. The regulatory region of GlnE binds the signal transduction protein PII (GlnB) which indicates the nitrogen status of the cell. The protein is Bifunctional glutamine synthetase adenylyltransferase/adenylyl-removing enzyme of Photobacterium profundum (strain SS9).